Here is a 226-residue protein sequence, read N- to C-terminus: Deoxyribose-phosphate aldolase (226 aa).

Glu96 (proton donor/acceptor) is an active-site residue. The Schiff-base intermediate with acetaldehyde role is filled by Lys157. Lys185 acts as the Proton donor/acceptor in catalysis.

This sequence belongs to the DeoC/FbaB aldolase family. DeoC type 1 subfamily.

Its subcellular location is the cytoplasm. It carries out the reaction 2-deoxy-D-ribose 5-phosphate = D-glyceraldehyde 3-phosphate + acetaldehyde. It participates in carbohydrate degradation; 2-deoxy-D-ribose 1-phosphate degradation; D-glyceraldehyde 3-phosphate and acetaldehyde from 2-deoxy-alpha-D-ribose 1-phosphate: step 2/2. Catalyzes a reversible aldol reaction between acetaldehyde and D-glyceraldehyde 3-phosphate to generate 2-deoxy-D-ribose 5-phosphate. In Gloeobacter violaceus (strain ATCC 29082 / PCC 7421), this protein is Deoxyribose-phosphate aldolase.